The following is a 559-amino-acid chain: Formate--tetrahydrofolate ligase (559 aa).

68–75 contributes to the ATP binding site; that stretch reads TPAGEGKT.

Belongs to the formate--tetrahydrofolate ligase family.

The enzyme catalyses (6S)-5,6,7,8-tetrahydrofolate + formate + ATP = (6R)-10-formyltetrahydrofolate + ADP + phosphate. It functions in the pathway one-carbon metabolism; tetrahydrofolate interconversion. The protein is Formate--tetrahydrofolate ligase of Moorella thermoacetica (strain ATCC 39073 / JCM 9320).